A 215-amino-acid chain; its full sequence is BAG family molecular chaperone regulator 5, mitochondrial (215 aa).

The transit peptide at 1-14 (MKRSRKFSSSTTTT) directs the protein to the mitochondrion. An IQ domain is found at 50 to 79 (ATAAAARIQSGYRSYRIRNLYKKISSINRE). The BAG domain maps to 72–149 (KISSINREAN…GMQEILDSIS (78 aa)).

As to quaternary structure, binds to the ATPase domain of HSP70/HSC70 chaperones. Interacts with HSP70-1.

The protein resides in the mitochondrion. In terms of biological role, co-chaperone that regulates diverse cellular pathways, such as programmed cell death and stress responses. This chain is BAG family molecular chaperone regulator 5, mitochondrial (BAG5), found in Arabidopsis thaliana (Mouse-ear cress).